A 944-amino-acid chain; its full sequence is MIGYVLKKILGTKNDREIKKIRKWVEKINALEESLDKLSNKDIVLKAQDLYFRVNQNEHIKQAIIEGEMVEELIEAFALVREASKRTMGLRQFDVQLIGGIVLYQGKIAEMKTGEGKTLVAAAPAFFTALTDTGVHVVTVNDYLAKRDATWIGPIYRFLGLDVGVINSDNMSYIIDWQDPEKAMEAIEKDIRVWPKGMVGDAIDYSKIDVHAKTSYFTKAISVERAKAYEAHITYGTNNEFGFDYLRDNLAVSKDQIVQVKGHGYAIVDEIDSILIDEARTPLIIAGPSNLDNKVVLQANEFVQTLEIEKDFIVDEKNRTAMLTEEGIEKAEKYFNIQNLYDIRHIDLVHAINKALLAHNLYKKDVHYMVKDGEILIVDEFTGRALPGRRWSEGLHQAIEAKEGVEIQEENQTLATTAFQNYFKLYKKLAGMTGTAETEALEFKEIYSLDVVVIPTNKPNIRKDLPDAIFKTKKEKWEYIAKVIEENHAKGRPILVGTVSIEDSETLSKLLEQRGIKHNVLNAKQHEKEAWIIAQAGRKGAVTIATNMAGRGTDILLGGNPEFLAREILKQKGIDEDKATEEEWKQAYEEATKITQKEKEEVIKAGGLLVIGTERHESRRVDNQLRGRAGRQGDPGESRFILSLEDDLLRIFGGDRVKKLMEFMKIPEGEPIESSIVSKSLEGAQERVELQNFQSRKRLLEYDEVINIQRSVVYDIRRSILFQDDIKEEIKDFIKDVIHTQVFTLLTEDEPELWELEPLKTFFKEWIDLDLPEKFEAKDREELEEEIFKLVMEKYAQKEQEIGEKTMREIEKVFTLNIIDNLWREQLHTIDKLREGIYLRSYAQRDPLVEFKKEAFRLFEELMLNFKISAIQSIMNAQISKEELEQQEQNMFNLEIDTLNKSMAISEALENIAKEFQEKRPRFRTLKDRLEERKKKLEKKGESA.

ATP is bound by residues Q96, 114–118 (GEGKT), and D554.

It belongs to the SecA family. As to quaternary structure, monomer and homodimer. Part of the essential Sec protein translocation apparatus which comprises SecA, SecYEG and auxiliary proteins SecDF. Other proteins may also be involved.

The protein resides in the cell inner membrane. It localises to the cytoplasm. The enzyme catalyses ATP + H2O + cellular proteinSide 1 = ADP + phosphate + cellular proteinSide 2.. Functionally, part of the Sec protein translocase complex. Interacts with the SecYEG preprotein conducting channel. Has a central role in coupling the hydrolysis of ATP to the transfer of proteins into and across the cell membrane, serving as an ATP-driven molecular motor driving the stepwise translocation of polypeptide chains across the membrane. The chain is Protein translocase subunit SecA from Hydrogenobaculum sp. (strain Y04AAS1).